Here is a 464-residue protein sequence, read N- to C-terminus: Clusterin-like protein 1 (464 aa).

An N-terminal signal peptide occupies residues 1–20 (MQPPLFVISVYLLWLKYCDS). Residues 56 to 109 (IKQMKIMMERREEEHAKLMKALKKCKEEKQEAQKLMNEVQERLEEEEKLCQASS) are a coiled coil. 5 disulfides stabilise this stretch: C105–C331, C116–C323, C119–C320, C124–C313, and C131–C303. N-linked (GlcNAc...) asparagine glycosylation is found at N195, N255, N309, N349, N398, and N429.

It belongs to the clusterin family.

It localises to the secreted. This is Clusterin-like protein 1 from Rattus norvegicus (Rat).